A 555-amino-acid polypeptide reads, in one-letter code: L-ascorbate oxidase homolog (555 aa).

The signal sequence occupies residues 1–23 (MRGVKLLAACLYLAAAATVVVHA). 2 consecutive Plastocyanin-like domains span residues 25–145 (DPYF…LRVN) and 158–301 (EDDY…RYEG). N33, N61, and N110 each carry an N-linked (GlcNAc...) asparagine glycan. C103 and C539 form a disulfide bridge. 3 N-linked (GlcNAc...) asparagine glycosylation sites follow: N330, N350, and N422. Residues 345-524 (HYGKINITRT…LYASVLSPEK (180 aa)) enclose the Plastocyanin-like 3 domain.

This sequence belongs to the multicopper oxidase family. Maximal expression in early binucleate microspores; declines considerably in mature trinucleate pollen.

The protein localises to the secreted. Its function is as follows. Probable oxidase that may be involved in pollen tube growth. The sequence is that of L-ascorbate oxidase homolog (Bp10) from Brassica napus (Rape).